The following is an 856-amino-acid chain: cGMP-dependent protein kinase (856 aa).

An autoinhibitory segment region spans residues 1 to 33 (MDDDEIIPKKNHPSNERNKKKAILSHEDFTGED). CNMP-binding domain regions lie at residues 62-177 (VCST…FIDS), 180-279 (VFDM…VVLG), 299-402 (IFKQ…LGNN), and 422-521 (IFRY…LQII). 3',5'-cyclic GMP-binding residues include K117, G126, E127, A129, R136, and S137. Residues R477, G486, E487, A489, R496, and T497 each contribute to the 3',5'-cyclic GMP site. The region spanning 545-802 (LLTERIIGRG…FKDIKENSFF (258 aa)) is the Protein kinase domain. Residues 551–559 (IGRGTFGIV) and K574 contribute to the ATP site. D668 acts as the Proton acceptor in catalysis. An AGC-kinase C-terminal domain is found at 803-856 (ADFDWDRLAGRLLEPPLISKSETYAEDIDVKQIEQEEEDNANTEIDDENWDIDF). Residues 837-856 (QEEEDNANTEIDDENWDIDF) are disordered.

This sequence belongs to the protein kinase superfamily. AGC Ser/Thr protein kinase family. cGMP subfamily. In terms of assembly, monomer. It depends on Mg(2+) as a cofactor. In terms of processing, autophosphorylated.

Its subcellular location is the cytoplasm. It localises to the endoplasmic reticulum membrane. The catalysed reaction is L-seryl-[protein] + ATP = O-phospho-L-seryl-[protein] + ADP + H(+). It catalyses the reaction L-threonyl-[protein] + ATP = O-phospho-L-threonyl-[protein] + ADP + H(+). Activated by cGMP. Not activated by cAMP. cGMP binding allosterically triggers a conformational change at the alpha C-helix of cGMP-binding domain 4, which bridges the regulatory and catalytic domains, causing the capping triad, composed of Arg-488, Gln-536 and Asp-537, to form and stabilize the active conformation. The cGMP-binding domains acts cooperatively to activate PKG. Serine/threonine protein kinase which acts as a downstream effector of the second messenger cGMP. Controls the release of Ca(2+) from intracellular stores by regulating phosphoinositide biosynthesis. Ca(2+) signals are essential for merozoite and sporozoite invasion and egress from host hepatocytes and erythrocytes, and, in the mosquito vector, for gametocyte activation, and ookinete and sporozoite motility. During the host liver stage, regulates the initial invasion of host hepatocytes by sporozoites by regulating sporozoite motility and microneme exocytosis. Following parasite development in the hepatocytes, required for the release of merosomes, a vesicle containing the mature merozoites. During the asexual blood stage, required for the progression from schizont to the ring stage following merozoite invasion of host erythrocytes and for merozoite egress. Regulates merozoite egress by promoting the release of exonemes and micronemes which contain proteins essential for egress. Phosphorylates CDPK1 predominantly at the late schizont stage; phosphorylation at 'Ser-64' regulates CDPK1 protein-protein interaction and phosphorylation at 'Thr-231' may regulate CDPK1 kinase activity. In the mosquito vector, required for the initiation of gametogenesis induced by xanthurenic acid, specifically the gametocyte differentiation from the crescent-shaped form to the spherical form. Required for the gliding motility of ookinetes to reach and penetrate the midgut epithelium by promoting Ca(2+)-mediated activation of CDPK1 and CDPK4. Also required for microneme secretion in ookinete by promoting Ca(2+)-mediated activation of CDPK3. The protein is cGMP-dependent protein kinase of Plasmodium berghei (strain Anka).